Consider the following 789-residue polypeptide: Mediator of RNA polymerase II transcription subunit 15 (789 aa).

An interaction with SREBF1 region spans residues 9 to 73 (DWRSAAFRQK…IHFRDIHNKK (65 aa)). 2 disordered regions span residues 88–140 (LTGG…APHG) and 257–326 (QQQA…PLVS). The segment covering 89 to 102 (TGGPTPGAAGIGMP) has biased composition (low complexity). The segment covering 108–118 (QSLGGMGGLGA) has biased composition (gly residues). Low complexity-rich tracts occupy residues 257 to 274 (QQQALQAQPPMQQPSMQQ), 282 to 291 (ALPQQLSQLH), and 302 to 326 (AQQSPIAQNQPPQIPPQSQSQPLVS). Arg347 is modified (asymmetric dimethylarginine). Residues 404-531 (RFPPTSTMSA…PAGSSQAEEQ (128 aa)) are disordered. The segment covering 407–426 (PTSTMSAGPSSSISLGGQPT) has biased composition (polar residues). Residues 427–450 (TQVSQSSLTMLSSPSPGQQVQTPQ) are compositionally biased toward low complexity. A compositionally biased stretch (pro residues) spans 451 to 463 (SMPPPPQPSPQPG). Residues 464–483 (SQPNSNVSSGPAPSPSSFLP) are compositionally biased toward low complexity. Composition is skewed to polar residues over residues 494–504 (VTARTPQNFSV) and 512–530 (TPVNPSSVMSPAGSSQAEE). The Nuclear localization signal motif lies at 548-565 (RRMINKIDKNEDRKKDLS). A Phosphothreonine modification is found at Thr604.

This sequence belongs to the Mediator complex subunit 15 family. In terms of assembly, component of the Mediator complex, which is composed of MED1, MED4, MED6, MED7, MED8, MED9, MED10, MED11, MED12, MED13, MED13L, MED14, MED15, MED16, MED17, MED18, MED19, MED20, MED21, MED22, MED23, MED24, MED25, MED26, MED27, MED29, MED30, MED31, CCNC, CDK8 and CDC2L6/CDK11. The MED12, MED13, CCNC and CDK8 subunits form a distinct module termed the CDK8 module. Mediator containing the CDK8 module is less active than Mediator lacking this module in supporting transcriptional activation. Individual preparations of the Mediator complex lacking one or more distinct subunits have been variously termed ARC, CRSP, DRIP, PC2, SMCC and TRAP. Interacts with SMAD2, SMAD3, SREBF1 and SREBF2. Interacts with WWTR1. Interacts with TRIM11. Ubiquitinated by TRIM11, leading to proteasomal degradation.

The protein resides in the cytoplasm. Its subcellular location is the nucleus. In terms of biological role, component of the Mediator complex, a coactivator involved in the regulated transcription of nearly all RNA polymerase II-dependent genes. Mediator functions as a bridge to convey information from gene-specific regulatory proteins to the basal RNA polymerase II transcription machinery. Mediator is recruited to promoters by direct interactions with regulatory proteins and serves as a scaffold for the assembly of a functional preinitiation complex with RNA polymerase II and the general transcription factors. Required for cholesterol-dependent gene regulation. Positively regulates the Nodal signaling pathway. This is Mediator of RNA polymerase II transcription subunit 15 (Med15) from Mus musculus (Mouse).